Reading from the N-terminus, the 585-residue chain is Arginine--tRNA ligase (585 aa).

The 'HIGH' region signature appears at Pro-127–His-137.

This sequence belongs to the class-I aminoacyl-tRNA synthetase family. Monomer.

Its subcellular location is the cytoplasm. The catalysed reaction is tRNA(Arg) + L-arginine + ATP = L-arginyl-tRNA(Arg) + AMP + diphosphate. In Borrelia garinii subsp. bavariensis (strain ATCC BAA-2496 / DSM 23469 / PBi) (Borreliella bavariensis), this protein is Arginine--tRNA ligase.